A 300-amino-acid chain; its full sequence is Flaviolin linalyltransferase (300 aa).

The protein belongs to the aromatic prenyltransferase family. Monomer.

It catalyses the reaction flaviolin + (2E)-geranyl diphosphate = 3-linalylflaviolin + diphosphate. Does not require magnesium or any other divalent metal ions for activity. In terms of biological role, involved in the biosynthesis of furanonaphthoquinone I (FNQ I). Catalyzes C- and O-prenylations of different phenolic substrates. With flaviolin as substrate, catalyzes the formation of a carbon-carbon-bond between C-3 (rather than C-1) of geranyl diphosphate and C-3 of flaviolin. With 1,3-dihydroxynaphthalene and 4-hydroxybenzoate as substrates, catalyzes O-prenylations. In Streptomyces virginiae (Streptomyces cinnamonensis), this protein is Flaviolin linalyltransferase.